The primary structure comprises 409 residues: Elongation factor Tu (409 aa).

In terms of domain architecture, tr-type G spans Lys-10 to Glu-214. The G1 stretch occupies residues Gly-19–Thr-26. Residue Gly-19 to Thr-26 participates in GTP binding. Position 26 (Thr-26) interacts with Mg(2+). Positions Gly-60–Asn-64 are G2. A G3 region spans residues Asp-81–Gly-84. GTP-binding positions include Asp-81–His-85 and Asn-136–Asp-139. The G4 stretch occupies residues Asn-136–Asp-139. A G5 region spans residues Ser-174–Leu-176.

The protein belongs to the TRAFAC class translation factor GTPase superfamily. Classic translation factor GTPase family. EF-Tu/EF-1A subfamily. As to quaternary structure, monomer.

The protein localises to the cytoplasm. It catalyses the reaction GTP + H2O = GDP + phosphate + H(+). Its function is as follows. GTP hydrolase that promotes the GTP-dependent binding of aminoacyl-tRNA to the A-site of ribosomes during protein biosynthesis. The chain is Elongation factor Tu from Synechococcus sp. (strain JA-2-3B'a(2-13)) (Cyanobacteria bacterium Yellowstone B-Prime).